The following is a 1112-amino-acid chain: Cytosolic carboxypeptidase 4 (1112 aa).

The tract at residues Thr291 to Glu345 is disordered. Over residues Pro299–Thr329 the composition is skewed to acidic residues. One can recognise a Peptidase M14 domain in the interval Tyr732–Gln1022. The Zn(2+) site is built by His804, Glu807, and His901. Catalysis depends on Glu986, which acts as the Proton donor/acceptor.

The protein belongs to the peptidase M14 family. In terms of assembly, interacts with MYLK. Interacts with TCF4. Zn(2+) serves as cofactor. As to expression, expressed in corneal endothelium.

The protein localises to the cytoplasm. It localises to the cytosol. The catalysed reaction is (L-glutamyl)(n+1)-gamma-L-glutamyl-L-glutamyl-[protein] + H2O = (L-glutamyl)(n)-gamma-L-glutamyl-L-glutamyl-[protein] + L-glutamate. The enzyme catalyses C-terminal L-alpha-aminoacyl-L-glutamyl-L-glutamyl-[tubulin] + H2O = C-terminal L-alpha-aminoacyl-L-glutamyl-[tubulin] + L-glutamate. Metallocarboxypeptidase that mediates deglutamylation of tubulin and non-tubulin target proteins. Catalyzes the removal of polyglutamate side chains present on the gamma-carboxyl group of glutamate residues within the C-terminal tail of tubulin protein. Specifically cleaves tubulin long-side-chains, while it is not able to remove the branching point glutamate. Also catalyzes the removal of polyglutamate residues from the carboxy-terminus of non-tubulin proteins such as MYLK. The sequence is that of Cytosolic carboxypeptidase 4 from Homo sapiens (Human).